The chain runs to 260 residues: Ribonuclease HII (260 aa).

In terms of domain architecture, RNase H type-2 spans 75–260 (ELIAGVDEVG…FEPIKSIIKK (186 aa)). A divalent metal cation-binding residues include Asp-81, Glu-82, and Asp-173.

This sequence belongs to the RNase HII family. The cofactor is Mn(2+). Requires Mg(2+) as cofactor.

The protein resides in the cytoplasm. It catalyses the reaction Endonucleolytic cleavage to 5'-phosphomonoester.. Endonuclease that specifically degrades the RNA of RNA-DNA hybrids. The sequence is that of Ribonuclease HII from Streptococcus thermophilus (strain CNRZ 1066).